Here is a 594-residue protein sequence, read N- to C-terminus: 3-hydroxy-3-methylglutaryl coenzyme A reductase 2-A (594 aa).

Positions 1–32 (MDVRRRPVKSLSSAKTATAGEPPKSQQQHPKA) are disordered. Topologically, residues 1 to 37 (MDVRRRPVKSLSSAKTATAGEPPKSQQQHPKASDALP) are lumenal. Residues 38 to 58 (LPLYLTNGLFFTMFFSVMYFL) form a helical membrane-spanning segment. Residues 59–81 (LHRWREKIRNSTPLHVVTLSELA) are Cytoplasmic-facing. The chain crosses the membrane as a helical span at residues 82 to 102 (ALVLLMASVIYLLGFFGIGFV). Topologically, residues 103–549 (RSVIRPSPDA…SKESPGSNSR (447 aa)) are lumenal. Asn-261 carries N-linked (GlcNAc...) asparagine glycosylation. Residue Glu-273 is the Charge relay system of the active site. The N-linked (GlcNAc...) asparagine glycan is linked to Asn-337. Catalysis depends on charge relay system residues Lys-405 and Asp-481. Residues 550 to 570 (LLASIVAGSVLAGELSLMSAL) form a helical membrane-spanning segment. Residues 571-594 (AAGQLVKSHMKYNRSSKDITKLSS) lie on the Cytoplasmic side of the membrane. His-579 acts as the Proton donor in catalysis.

The protein belongs to the HMG-CoA reductase family. In terms of tissue distribution, mostly expressed in the petioles of seedlings, seedlings and roots, and, to a lower extent, in seeds, leaves, stems and flowers.

The protein localises to the endoplasmic reticulum membrane. It is found in the plastid. Its subcellular location is the chloroplast membrane. It localises to the peroxisome membrane. It carries out the reaction (R)-mevalonate + 2 NADP(+) + CoA = (3S)-3-hydroxy-3-methylglutaryl-CoA + 2 NADPH + 2 H(+). It functions in the pathway metabolic intermediate biosynthesis; (R)-mevalonate biosynthesis; (R)-mevalonate from acetyl-CoA: step 3/3. Its activity is regulated as follows. Competitive inhibition by mevinolin (Mev) is leading to a significant reduction of total ginsenoside in adventitious roots. Triggered by darkness. In terms of biological role, catalyzes the synthesis of mevalonate, the specific precursor of all isoprenoid compounds present in plants. Component of the triterpene saponins (e.g. ginsenosides or panaxosides) and phytosterols biosynthetic pathways. This Panax ginseng (Korean ginseng) protein is 3-hydroxy-3-methylglutaryl coenzyme A reductase 2-A.